Reading from the N-terminus, the 209-residue chain is Translation initiation factor IF-3 (209 aa).

The protein belongs to the IF-3 family. Monomer.

It localises to the cytoplasm. Functionally, IF-3 binds to the 30S ribosomal subunit and shifts the equilibrium between 70S ribosomes and their 50S and 30S subunits in favor of the free subunits, thus enhancing the availability of 30S subunits on which protein synthesis initiation begins. The chain is Translation initiation factor IF-3 from Chlorobium phaeovibrioides (strain DSM 265 / 1930) (Prosthecochloris vibrioformis (strain DSM 265)).